The following is a 186-amino-acid chain: Negative modulator of initiation of replication (186 aa).

It belongs to the SeqA family. As to quaternary structure, homodimer. Polymerizes to form helical filaments.

It localises to the cytoplasm. Negative regulator of replication initiation, which contributes to regulation of DNA replication and ensures that replication initiation occurs exactly once per chromosome per cell cycle. Binds to pairs of hemimethylated GATC sequences in the oriC region, thus preventing assembly of replication proteins and re-initiation at newly replicated origins. Repression is relieved when the region becomes fully methylated. In Glaesserella parasuis serovar 5 (strain SH0165) (Haemophilus parasuis), this protein is Negative modulator of initiation of replication.